A 739-amino-acid chain; its full sequence is Phosphoribosylformylglycinamidine synthase subunit PurL (739 aa).

The active site involves His54. Tyr57 and Lys96 together coordinate ATP. Glu98 contacts Mg(2+). Substrate-binding positions include 99 to 102 (SHNH) and Arg121. His100 serves as the catalytic Proton acceptor. Asp122 lines the Mg(2+) pocket. Gln245 contributes to the substrate binding site. Asp273 lines the Mg(2+) pocket. Substrate is bound at residue 317–319 (ESQ). The ATP site is built by Asp500 and Gly537. Asn538 lines the Mg(2+) pocket. Ser540 is a binding site for substrate.

It belongs to the FGAMS family. Monomer. Part of the FGAM synthase complex composed of 1 PurL, 1 PurQ and 2 PurS subunits.

The protein localises to the cytoplasm. It catalyses the reaction N(2)-formyl-N(1)-(5-phospho-beta-D-ribosyl)glycinamide + L-glutamine + ATP + H2O = 2-formamido-N(1)-(5-O-phospho-beta-D-ribosyl)acetamidine + L-glutamate + ADP + phosphate + H(+). It functions in the pathway purine metabolism; IMP biosynthesis via de novo pathway; 5-amino-1-(5-phospho-D-ribosyl)imidazole from N(2)-formyl-N(1)-(5-phospho-D-ribosyl)glycinamide: step 1/2. Its function is as follows. Part of the phosphoribosylformylglycinamidine synthase complex involved in the purines biosynthetic pathway. Catalyzes the ATP-dependent conversion of formylglycinamide ribonucleotide (FGAR) and glutamine to yield formylglycinamidine ribonucleotide (FGAM) and glutamate. The FGAM synthase complex is composed of three subunits. PurQ produces an ammonia molecule by converting glutamine to glutamate. PurL transfers the ammonia molecule to FGAR to form FGAM in an ATP-dependent manner. PurS interacts with PurQ and PurL and is thought to assist in the transfer of the ammonia molecule from PurQ to PurL. In Bacillus cereus (strain ATCC 10987 / NRS 248), this protein is Phosphoribosylformylglycinamidine synthase subunit PurL.